The primary structure comprises 248 residues: Aspartate/glutamate leucyltransferase (248 aa).

This sequence belongs to the R-transferase family. Bpt subfamily.

The protein resides in the cytoplasm. It catalyses the reaction N-terminal L-glutamyl-[protein] + L-leucyl-tRNA(Leu) = N-terminal L-leucyl-L-glutamyl-[protein] + tRNA(Leu) + H(+). It carries out the reaction N-terminal L-aspartyl-[protein] + L-leucyl-tRNA(Leu) = N-terminal L-leucyl-L-aspartyl-[protein] + tRNA(Leu) + H(+). Functions in the N-end rule pathway of protein degradation where it conjugates Leu from its aminoacyl-tRNA to the N-termini of proteins containing an N-terminal aspartate or glutamate. The polypeptide is Aspartate/glutamate leucyltransferase (Methylobacterium nodulans (strain LMG 21967 / CNCM I-2342 / ORS 2060)).